The chain runs to 1408 residues: DNA-directed RNA polymerase subunit beta' (1408 aa).

Cys-70, Cys-72, Cys-85, and Cys-88 together coordinate Zn(2+). Mg(2+)-binding residues include Asp-460, Asp-462, and Asp-464. Zn(2+) is bound by residues Cys-814, Cys-888, Cys-895, and Cys-898.

Belongs to the RNA polymerase beta' chain family. As to quaternary structure, the RNAP catalytic core consists of 2 alpha, 1 beta, 1 beta' and 1 omega subunit. When a sigma factor is associated with the core the holoenzyme is formed, which can initiate transcription. Requires Mg(2+) as cofactor. Zn(2+) serves as cofactor.

The catalysed reaction is RNA(n) + a ribonucleoside 5'-triphosphate = RNA(n+1) + diphosphate. Functionally, DNA-dependent RNA polymerase catalyzes the transcription of DNA into RNA using the four ribonucleoside triphosphates as substrates. The sequence is that of DNA-directed RNA polymerase subunit beta' from Serratia proteamaculans (strain 568).